We begin with the raw amino-acid sequence, 1174 residues long: Ribonucleoside-diphosphate reductase large subunit-like protein (1174 aa).

The RIP homotypic interaction motif (RHIM) motif lies at 50 to 72; sequence PYVRIMNGVSGIQIGNHNAMSIA. Disordered regions lie at residues 170–269 and 291–325; these read ASNA…KLKP and AAAA…DQSS. Composition is skewed to low complexity over residues 182 to 202, 233 to 243, and 291 to 316; these read ATSG…AATA, HVSVGTQATPS, and AAAA…AMAT.

The protein belongs to the ribonucleoside diphosphate reductase large chain family. In terms of assembly, self-assembles into homo-oligomeric amyloid fibrils. Interacts with host RIPK1 (via RIP homotypic interaction motif); this interaction inhibits RIPK1 ubiquitination thereby preventing effective activation of host NF-kappa-B. Interacts with host RIPK3 (via RIP homotypic interaction motif); this interaction disrupts RIPK3-RIPK1 interactions characteristic of TNF-alpha induced necroptosis, thereby suppressing this death pathway. Interacts (via RIP homotypic interaction motif) with host ZBP1 (via RIP homotypic interaction motif); this interaction inhibits recruitment of RIPK1 and RIPK3 to ZBP1 and prevents ZBP1-induced NF-kappa-B activation. Post-translationally, undergoes proteolytic cleavage, generating two peptides, a N-terminal and a 116 kDa. The N-terminal peptide retains RIPK1- and RIPK3-binding activity as well as cell death suppression activity.

Its subcellular location is the virion. It localises to the host cytoplasm. Its function is as follows. Provides optimal viral replication conditions by promoting host cell survival and avoiding the host inflammatory response linked to NF-kappa-B activation. Blocks RIPK1 ubiquitination, thereby preventing NF-kappa-B activation and virally induced inflammatory response. Prevents host necroptosis by targeting RIPK3 thereby preventing the formation of necroptotic RIPK1-RIPK3 complexes. Also inhibits ZBP1-induced necroptosis. Does not have ribonucleotide reductase activity. Betaherpesviruses probably use another strategy to expand the dNTP pool in a quiescent host cell. This is Ribonucleoside-diphosphate reductase large subunit-like protein from Murid herpesvirus 1 (strain Smith) (MuHV-1).